Reading from the N-terminus, the 265-residue chain is Speedy protein E8 (265 aa).

The segment at 1–80 is disordered; that stretch reads MGQILGKIMM…EPEKELAPEP (80 aa). Residues 66–80 show a composition bias toward acidic residues; sequence DESDDEPEKELAPEP.

It belongs to the Speedy/Ringo family.

The sequence is that of Speedy protein E8 from Homo sapiens (Human).